The sequence spans 219 residues: MNKEKAIVVFSGGQDSTTCLFWAKKKYEEVIAVSFDYNQKHKLELDCAKDICKKYNVEHHILDLNLLNQLAPNSLTRQDITVDKSAPKEGVPNSFVDGRNLLFLSFVAVFAKQKGVNTIITGVSQSDFSGYPDCRAVFIKSLNVTLDLAMDYEFEIITPLMWINKAETWKMAYDLGVLDIVKEETLTCYNGIKADGCGECPACKLRKKGYLEFEKQFMC.

10-20 (FSGGQDSTTCL) is a binding site for ATP. Positions 188, 197, 200, and 203 each coordinate Zn(2+).

The protein belongs to the QueC family. In terms of assembly, homodimer. It depends on Zn(2+) as a cofactor.

It carries out the reaction 7-carboxy-7-deazaguanine + NH4(+) + ATP = 7-cyano-7-deazaguanine + ADP + phosphate + H2O + H(+). Its pathway is purine metabolism; 7-cyano-7-deazaguanine biosynthesis. In terms of biological role, catalyzes the ATP-dependent conversion of 7-carboxy-7-deazaguanine (CDG) to 7-cyano-7-deazaguanine (preQ(0)). In Clostridium botulinum (strain Loch Maree / Type A3), this protein is 7-cyano-7-deazaguanine synthase.